We begin with the raw amino-acid sequence, 433 residues long: Pyrimidine-nucleoside phosphorylase (433 aa).

81-83 (KHS) is a binding site for phosphate. 2 residues coordinate K(+): Gly88 and Thr90. Phosphate is bound by residues Thr92, 108–110 (KMS), and Thr120. Substrate-binding residues include Arg168 and Lys187. Leu243, Ala246, and Glu255 together coordinate K(+).

It belongs to the thymidine/pyrimidine-nucleoside phosphorylase family. As to quaternary structure, homodimer. Requires K(+) as cofactor.

The enzyme catalyses uridine + phosphate = alpha-D-ribose 1-phosphate + uracil. It catalyses the reaction thymidine + phosphate = 2-deoxy-alpha-D-ribose 1-phosphate + thymine. It carries out the reaction 2'-deoxyuridine + phosphate = 2-deoxy-alpha-D-ribose 1-phosphate + uracil. Its function is as follows. Catalyzes phosphorolysis of the pyrimidine nucleosides uridine, thymidine and 2'-deoxyuridine with the formation of the corresponding pyrimidine base and ribose-1-phosphate. The protein is Pyrimidine-nucleoside phosphorylase (pdp) of Staphylococcus epidermidis (strain ATCC 35984 / DSM 28319 / BCRC 17069 / CCUG 31568 / BM 3577 / RP62A).